The sequence spans 237 residues: Demethylmenaquinone methyltransferase (237 aa).

S-adenosyl-L-methionine-binding positions include threonine 58, aspartate 79, and 106-107 (NA).

The protein belongs to the class I-like SAM-binding methyltransferase superfamily. MenG/UbiE family.

The catalysed reaction is a 2-demethylmenaquinol + S-adenosyl-L-methionine = a menaquinol + S-adenosyl-L-homocysteine + H(+). It participates in quinol/quinone metabolism; menaquinone biosynthesis; menaquinol from 1,4-dihydroxy-2-naphthoate: step 2/2. In terms of biological role, methyltransferase required for the conversion of demethylmenaquinol (DMKH2) to menaquinol (MKH2). In Listeria monocytogenes serotype 4a (strain HCC23), this protein is Demethylmenaquinone methyltransferase.